The primary structure comprises 349 residues: Probable ethanolamine kinase (349 aa).

The protein belongs to the choline/ethanolamine kinase family.

It is found in the cytoplasm. It catalyses the reaction ethanolamine + ATP = phosphoethanolamine + ADP + H(+). It participates in phospholipid metabolism; phosphatidylethanolamine biosynthesis; phosphatidylethanolamine from ethanolamine: step 1/3. Highly specific for ethanolamine phosphorylation. May be a rate-controlling step in phosphatidylethanolamine biosynthesis. This chain is Probable ethanolamine kinase (etnk), found in Nematostella vectensis (Starlet sea anemone).